We begin with the raw amino-acid sequence, 94 residues long: Progonadoliberin-3 (94 aa).

The first 23 residues, 1–23 (MEGKGRVLVQLLMLACVLEVSLC), serve as a signal peptide directing secretion. Q24 is modified (pyrrolidone carboxylic acid). Glycine amide is present on G33.

The protein belongs to the GnRH family.

The protein localises to the secreted. Functionally, stimulates the secretion of gonadotropins. The polypeptide is Progonadoliberin-3 (gnrh3) (Carassius auratus (Goldfish)).